Here is a 319-residue protein sequence, read N- to C-terminus: Phosphoenolpyruvate transferase (319 aa).

Asp-50 lines the 7,8-didemethyl-8-hydroxy-5-deazariboflavin pocket.

Belongs to the CofD family. In terms of assembly, homodimer. It depends on Mg(2+) as a cofactor.

It catalyses the reaction enolpyruvoyl-2-diphospho-5'-guanosine + 7,8-didemethyl-8-hydroxy-5-deazariboflavin = dehydro coenzyme F420-0 + GMP + H(+). It participates in cofactor biosynthesis; coenzyme F420 biosynthesis. Its function is as follows. Catalyzes the transfer of the phosphoenolpyruvate moiety from enoylpyruvoyl-2-diphospho-5'-guanosine (EPPG) to 7,8-didemethyl-8-hydroxy-5-deazariboflavin (FO) with the formation of dehydro coenzyme F420-0 and GMP. This is Phosphoenolpyruvate transferase from Streptomyces avermitilis (strain ATCC 31267 / DSM 46492 / JCM 5070 / NBRC 14893 / NCIMB 12804 / NRRL 8165 / MA-4680).